A 478-amino-acid polypeptide reads, in one-letter code: Proline--tRNA ligase (478 aa).

It belongs to the class-II aminoacyl-tRNA synthetase family. ProS type 3 subfamily. Homodimer.

It is found in the cytoplasm. It carries out the reaction tRNA(Pro) + L-proline + ATP = L-prolyl-tRNA(Pro) + AMP + diphosphate. Catalyzes the attachment of proline to tRNA(Pro) in a two-step reaction: proline is first activated by ATP to form Pro-AMP and then transferred to the acceptor end of tRNA(Pro). The polypeptide is Proline--tRNA ligase (Clostridium botulinum (strain ATCC 19397 / Type A)).